Here is a 509-residue protein sequence, read N- to C-terminus: Photosystem II CP47 reaction center protein (509 aa).

6 helical membrane-spanning segments follow: residues 21–36 (SVHI…WAGS), 101–115 (IVFS…IWHW), 140–156 (GIHL…FGAF), 203–218 (IAAG…FHLS), 237–252 (VLSS…AFVV), and 457–472 (SFAL…HGAR).

This sequence belongs to the PsbB/PsbC family. PsbB subfamily. PSII is composed of 1 copy each of membrane proteins PsbA, PsbB, PsbC, PsbD, PsbE, PsbF, PsbH, PsbI, PsbJ, PsbK, PsbL, PsbM, PsbT, PsbX, PsbY, PsbZ, Psb30/Ycf12, at least 3 peripheral proteins of the oxygen-evolving complex and a large number of cofactors. It forms dimeric complexes. The cofactor is Binds multiple chlorophylls. PSII binds additional chlorophylls, carotenoids and specific lipids..

Its subcellular location is the plastid. It localises to the chloroplast thylakoid membrane. Functionally, one of the components of the core complex of photosystem II (PSII). It binds chlorophyll and helps catalyze the primary light-induced photochemical processes of PSII. PSII is a light-driven water:plastoquinone oxidoreductase, using light energy to abstract electrons from H(2)O, generating O(2) and a proton gradient subsequently used for ATP formation. This Cicer arietinum (Chickpea) protein is Photosystem II CP47 reaction center protein.